The sequence spans 395 residues: uncharacterized protein (395 aa).

The next 12 helical transmembrane spans lie at 12-34 (LLAS…TIYL), 44-66 (LIGY…FGIL), 75-94 (YMLL…TLVN), 99-121 (VVLF…KAWF), 134-156 (FSIN…TLLV), 160-182 (INLP…QIWV), 208-230 (LLWF…SCIS), 245-264 (VVAV…QYSV), 271-293 (ANIR…GFIF), 298-320 (LLLW…PGEY), 341-360 (LGWL…LTSL), and 364-381 (SLFV…VLML).

It belongs to the major facilitator superfamily.

The protein resides in the cell inner membrane. In terms of biological role, a transporter able to export peptides. When overexpressed, allows cells deleted for multiple peptidases (pepA, pepB, pepD and pepN) to grow in the presence of dipeptides Ala-Gln or Gly-Tyr which otherwise inhibit growth. Cells overexpressing this protein have decreased intracellular levels of Ala-Gln dipeptide, and in a system that produces the Ala-Gln dipeptide overproduction of this protein increases export of the dipeptide. This is an uncharacterized protein from Escherichia coli (strain K12).